The following is a 517-amino-acid chain: Lysophosphatidylcholine acyltransferase 1 (517 aa).

The Cytoplasmic segment spans residues 1 to 52; that stretch reads MRFPNRKLHTAVNGGDSGVSTHFRNPFVHELRFTTLQKLKIAVMTVTLFPVR. The chain crosses the membrane as a helical; Signal-anchor for type II membrane protein span at residues 53–73; it reads LLFAAFMMLLAWPFAFVATVG. Topologically, residues 74–517 are lumenal; it reads RSENAVEPLS…SPRNHSKKQD (444 aa). Positions 129–134 match the HXXXXD motif motif; sequence HSSYFD. Asn-207 is a glycosylation site (N-linked (GlcNAc...) asparagine). The 36-residue stretch at 443–478 folds into the EF-hand domain; it reads VGDLAVSELFRAIDSQDKGKITFDELCSFMEKCPDL. N-linked (GlcNAc...) asparagine glycosylation occurs at Asn-511. The Di-lysine motif motif lies at 514–517; the sequence is KKQD.

Belongs to the 1-acyl-sn-glycerol-3-phosphate acyltransferase family.

The protein localises to the endoplasmic reticulum membrane. Its subcellular location is the golgi apparatus membrane. The protein resides in the cell membrane. It localises to the lipid droplet. The catalysed reaction is a 1-acyl-sn-glycero-3-phosphocholine + an acyl-CoA = a 1,2-diacyl-sn-glycero-3-phosphocholine + CoA. It catalyses the reaction a 1-O-alkyl-sn-glycero-3-phosphocholine + acetyl-CoA = a 1-O-alkyl-2-acetyl-sn-glycero-3-phosphocholine + CoA. The enzyme catalyses a 1-acyl-sn-glycero-3-phosphate + an acyl-CoA = a 1,2-diacyl-sn-glycero-3-phosphate + CoA. It carries out the reaction a 1-O-(1Z-alkenyl)-sn-glycero-3-phosphocholine + an acyl-CoA = a 1-O-(1Z-alkenyl)-2-acyl-sn-glycero-3-phosphocholine + CoA. The catalysed reaction is 1-acyl-sn-glycero-3-phospho-(1'-sn-glycerol) + an acyl-CoA = a 1,2-diacyl-sn-glycero-3-phospho-(1'-sn-glycerol) + CoA. It catalyses the reaction 1-hexadecanoyl-sn-glycero-3-phosphocholine + hexadecanoyl-CoA = 1,2-dihexadecanoyl-sn-glycero-3-phosphocholine + CoA. The enzyme catalyses 1-O-hexadecyl-sn-glycero-3-phosphocholine + hexadecanoyl-CoA = 1-O-hexadecyl-2-hexadecanoyl-sn-glycero-3-phosphocholine + CoA. It carries out the reaction a 1-O-(1Z-alkenyl)-sn-glycero-3-phosphocholine + hexadecanoyl-CoA = 1-O-(1Z)-alkenyl-2-hexadecanoyl-sn-glycero-3-phosphocholine + CoA. The catalysed reaction is 1-hexadecanoyl-sn-glycero-3-phospho-(1'-sn-glycerol) + hexadecanoyl-CoA = 1,2-dihexadecanoyl-sn-glycero-3-phospho-(1'-sn-glycerol) + CoA. It catalyses the reaction 1-dodecanoyl-sn-glycero-3-phosphocholine + hexadecanoyl-CoA = 1-dodecanoyl-2-hexadecanoyl-sn-glycero-3-phosphocholine + CoA. The enzyme catalyses 1-tetradecanoyl-sn-glycero-3-phosphocholine + hexadecanoyl-CoA = 1-tetradecanoyl-2-hexadecanoyl-sn-glycero-3-phosphocholine + CoA. It carries out the reaction 1-O-octadecyl-sn-glycero-3-phosphocholine + hexadecanoyl-CoA = 1-O-octadecyl-2-hexadecanoyl-sn-glycero-3-phosphocholine + CoA. The catalysed reaction is 1-octadecanoyl-sn-glycero-3-phosphocholine + hexadecanoyl-CoA = 1-octadecanoyl-2-hexadecanoyl-sn-glycero-3-phosphocholine + CoA. It catalyses the reaction 1-(9Z-octadecenoyl)-sn-glycero-3-phosphocholine + hexadecanoyl-CoA = 1-(9Z-octadecenoyl)-2-hexadecanoyl-sn-glycero-3-phosphocholine + CoA. The enzyme catalyses 1-eicosanoyl-sn-glycero-3-phosphocholine + hexadecanoyl-CoA = 1-eicosanoyl-2-hexadecanoyl-sn-glycero-3-phosphocholine + CoA. It carries out the reaction hexanoyl-CoA + 1-hexadecanoyl-sn-glycero-3-phosphocholine = 1-hexadecanoyl-2-hexanoyl-sn-glycero-3-phosphocholine + CoA. The catalysed reaction is octanoyl-CoA + 1-hexadecanoyl-sn-glycero-3-phosphocholine = 1-hexadecanoyl-2-octanoyl-sn-glycero-3-phosphocholine + CoA. It catalyses the reaction decanoyl-CoA + 1-hexadecanoyl-sn-glycero-3-phosphocholine = 1-hexadecanoyl-2-decanoyl-sn-glycero-3-phosphocholine + CoA. The enzyme catalyses dodecanoyl-CoA + 1-hexadecanoyl-sn-glycero-3-phosphocholine = 1-hexadecanoyl-2-dodecanoyl-sn-glycero-3-phosphocholine + CoA. It carries out the reaction tetradecanoyl-CoA + 1-hexadecanoyl-sn-glycero-3-phosphocholine = 1-hexadecanoyl-2-tetradecanoyl-sn-glycero-3-phosphocholine + CoA. The catalysed reaction is 1-hexadecanoyl-sn-glycero-3-phosphocholine + (9Z)-octadecenoyl-CoA = 1-hexadecanoyl-2-(9Z-octadecenoyl)-sn-glycero-3-phosphocholine + CoA. It catalyses the reaction (9Z,12Z)-octadecadienoyl-CoA + 1-hexadecanoyl-sn-glycero-3-phosphocholine = 1-hexadecanoyl-2-(9Z,12Z-octadecadienoyl)-sn-glycero-3-phosphocholine + CoA. The enzyme catalyses (4Z,7Z,10Z,13Z,16Z,19Z)-docosahexaenoyl-CoA + 1-hexadecanoyl-sn-glycero-3-phosphocholine = 1-hexadecanoyl-2-(4Z,7Z,10Z,13Z,16Z,19Z-docosahexaenoyl)-sn-glycero-3-phosphocholine + CoA. It carries out the reaction 1-hexadecanoyl-sn-glycero-3-phosphocholine + acetyl-CoA = 1-hexadecanoyl-2-acetyl-sn-glycero-3-phosphocholine + CoA. The catalysed reaction is eicosanoyl-CoA + 1-hexadecanoyl-sn-glycero-3-phosphocholine = 1-hexadecanoyl-2-eicosanoyl-sn-glycero-3-phosphocholine + CoA. It catalyses the reaction 1-O-hexadecyl-sn-glycero-3-phosphocholine + acetyl-CoA = 1-O-hexadecyl-2-acetyl-sn-glycero-3-phosphocholine + CoA. The enzyme catalyses a 1-acyl-sn-glycero-3-phosphocholine + hexadecanoyl-CoA = 1-acyl-2-hexadecanoyl-sn-glycero-3-phosphocholine + CoA. It carries out the reaction a 1-acyl-sn-glycero-3-phosphate + hexadecanoyl-CoA = 1-acyl-2-hexadecanoyl-sn-glycero-3-phosphate + CoA. The catalysed reaction is 1-acyl-sn-glycero-3-phospho-(1'-sn-glycerol) + hexadecanoyl-CoA = 1-acyl-2-hexadecanoyl-sn-glycero-3-phospho-(1'-sn-glycerol) + CoA. The protein operates within lipid metabolism; phospholipid metabolism. Exhibits both acyltransferase and acetyltransferase activities. Activity is calcium-independent. Catalyzes the conversion of lysophosphatidylcholine (1-acyl-sn-glycero-3-phosphocholine or LPC) into phosphatidylcholine (1,2-diacyl-sn-glycero-3-phosphocholine or PC). Catalyzes the conversion 1-acyl-sn-glycerol-3-phosphate (lysophosphatidic acid or LPA) into 1,2-diacyl-sn-glycerol-3-phosphate (phosphatidic acid or PA) by incorporating an acyl moiety at the sn-2 position of the glycerol backbone. This chain is Lysophosphatidylcholine acyltransferase 1 (lpcat1), found in Danio rerio (Zebrafish).